A 419-amino-acid chain; its full sequence is Putative competence-damage inducible protein (419 aa).

This sequence belongs to the CinA family.

This chain is Putative competence-damage inducible protein, found in Streptococcus agalactiae serotype Ia (strain ATCC 27591 / A909 / CDC SS700).